The following is a 429-amino-acid chain: 5-methylthioadenosine/S-adenosylhomocysteine deaminase (429 aa).

2 residues coordinate Zn(2+): His-66 and His-68. Substrate is bound by residues Glu-95, Arg-147, Arg-158, and His-181. His-208 is a binding site for Zn(2+). Positions 211 and 296 each coordinate substrate. Asp-296 serves as a coordination point for Zn(2+).

The protein belongs to the metallo-dependent hydrolases superfamily. MTA/SAH deaminase family. Zn(2+) is required as a cofactor.

It carries out the reaction S-adenosyl-L-homocysteine + H2O + H(+) = S-inosyl-L-homocysteine + NH4(+). It catalyses the reaction S-methyl-5'-thioadenosine + H2O + H(+) = S-methyl-5'-thioinosine + NH4(+). In terms of biological role, catalyzes the deamination of 5-methylthioadenosine and S-adenosyl-L-homocysteine into 5-methylthioinosine and S-inosyl-L-homocysteine, respectively. Is also able to deaminate adenosine. The chain is 5-methylthioadenosine/S-adenosylhomocysteine deaminase from Caldicellulosiruptor saccharolyticus (strain ATCC 43494 / DSM 8903 / Tp8T 6331).